A 111-amino-acid polypeptide reads, in one-letter code: MSKTIKVTFVINNGEEKIIEAPLGLSILEVAHSNSIDLEGACEGSLACATCHVILEEEFYNKLEKPKEEEEDMLDLAFGLTDTSRLGCQIILTEKLDGIKVRLPSATRNIK.

In terms of domain architecture, 2Fe-2S ferredoxin-type spans 5-107; the sequence is IKVTFVINNG…GIKVRLPSAT (103 aa). Positions 42, 48, 51, and 88 each coordinate [2Fe-2S] cluster.

This sequence belongs to the adrenodoxin/putidaredoxin family. It depends on [2Fe-2S] cluster as a cofactor.

Functionally, ferredoxin are iron-sulfur proteins that transfer electrons in a wide variety of metabolic reactions. This Rickettsia bellii (strain RML369-C) protein is 2Fe-2S ferredoxin (fdxB).